The primary structure comprises 402 residues: CCA-adding enzyme (402 aa).

2 residues coordinate ATP: Gly-32 and Arg-35. Gly-32 and Arg-35 together coordinate CTP. Mg(2+) is bound by residues Asp-45 and Asp-47. The ATP site is built by Arg-116, Asp-159, Arg-162, Arg-165, and Arg-168. 5 residues coordinate CTP: Arg-116, Asp-159, Arg-162, Arg-165, and Arg-168.

The protein belongs to the tRNA nucleotidyltransferase/poly(A) polymerase family. Bacterial CCA-adding enzyme type 3 subfamily. Homodimer. Mg(2+) is required as a cofactor.

It carries out the reaction a tRNA precursor + 2 CTP + ATP = a tRNA with a 3' CCA end + 3 diphosphate. The catalysed reaction is a tRNA with a 3' CCA end + 2 CTP + ATP = a tRNA with a 3' CCACCA end + 3 diphosphate. In terms of biological role, catalyzes the addition and repair of the essential 3'-terminal CCA sequence in tRNAs without using a nucleic acid template. Adds these three nucleotides in the order of C, C, and A to the tRNA nucleotide-73, using CTP and ATP as substrates and producing inorganic pyrophosphate. tRNA 3'-terminal CCA addition is required both for tRNA processing and repair. Also involved in tRNA surveillance by mediating tandem CCA addition to generate a CCACCA at the 3' terminus of unstable tRNAs. While stable tRNAs receive only 3'-terminal CCA, unstable tRNAs are marked with CCACCA and rapidly degraded. This chain is CCA-adding enzyme, found in Streptococcus pyogenes serotype M1.